Reading from the N-terminus, the 409-residue chain is Glucose-1-phosphate adenylyltransferase (409 aa).

Residues Gly-168, 183 to 184, and Ser-201 contribute to the alpha-D-glucose 1-phosphate site; that span reads EK.

It belongs to the bacterial/plant glucose-1-phosphate adenylyltransferase family. In terms of assembly, homotetramer.

The catalysed reaction is alpha-D-glucose 1-phosphate + ATP + H(+) = ADP-alpha-D-glucose + diphosphate. It functions in the pathway glycan biosynthesis; glycogen biosynthesis. Its function is as follows. Involved in the biosynthesis of ADP-glucose, a building block required for the elongation reactions to produce glycogen. Catalyzes the reaction between ATP and alpha-D-glucose 1-phosphate (G1P) to produce pyrophosphate and ADP-Glc. This chain is Glucose-1-phosphate adenylyltransferase, found in Corynebacterium glutamicum (strain R).